A 525-amino-acid chain; its full sequence is GMP synthase [glutamine-hydrolyzing] (525 aa).

In terms of domain architecture, Glutamine amidotransferase type-1 spans 16 to 205; sequence PVLVVDFGAQ…LHDFAGIGAR (190 aa). Cys93 functions as the Nucleophile in the catalytic mechanism. Catalysis depends on residues His179 and Glu181. The GMPS ATP-PPase domain occupies 206 to 399; that stretch reads WTPANIANAL…LGLPEEIVAR (194 aa). An ATP-binding site is contributed by 233-239; the sequence is SGGVDSA.

As to quaternary structure, homodimer.

The enzyme catalyses XMP + L-glutamine + ATP + H2O = GMP + L-glutamate + AMP + diphosphate + 2 H(+). The protein operates within purine metabolism; GMP biosynthesis; GMP from XMP (L-Gln route): step 1/1. Its function is as follows. Catalyzes the synthesis of GMP from XMP. This is GMP synthase [glutamine-hydrolyzing] from Mycobacterium marinum (strain ATCC BAA-535 / M).